The primary structure comprises 132 residues: MKVVNSSGKKKTAIARATFKEGKGRIRINNVPLEIIEPALARMKMMEPVIMAAEAFSSVDVDVSVMGGGVMGQADAVRTALARGILEWTGDAALKEAYAEYDRNLLVSDHRQKEKKKFGGLGARAKYQKSYR.

Belongs to the universal ribosomal protein uS9 family.

The protein is Small ribosomal subunit protein uS9 of Methanothrix thermoacetophila (strain DSM 6194 / JCM 14653 / NBRC 101360 / PT) (Methanosaeta thermophila).